A 231-amino-acid polypeptide reads, in one-letter code: Ribosyldihydronicotinamide dehydrogenase [quinone] (231 aa).

FAD is bound by residues H12 and 18–21 (FNGS). The residue at position 80 (S80) is a Phosphoserine. Residue 104–107 (LYWF) participates in FAD binding. Position 127-129 (127-129 (FDI)) interacts with substrate. FAD-binding positions include 148–151 (TTGG) and Y156. 2 residues coordinate Zn(2+): H174 and H178. Residue E194 coordinates FAD. S197 is subject to Phosphoserine. R201 serves as a coordination point for FAD. A Zn(2+)-binding site is contributed by C223.

Belongs to the NAD(P)H dehydrogenase (quinone) family. As to quaternary structure, homodimer. The cofactor is Zn(2+). It depends on FAD as a cofactor.

Its subcellular location is the cytoplasm. The enzyme catalyses 1-(beta-D-ribofuranosyl)-1,4-dihydronicotinamide + a quinone + H(+) = beta-nicotinamide D-riboside + a quinol. Its activity is regulated as follows. Inhibited by melatonin, resveratrol and 5-hydroxytryptamine. Functionally, the enzyme apparently serves as a quinone reductase in connection with conjugation reactions of hydroquinones involved in detoxification pathways as well as in biosynthetic processes such as the vitamin K-dependent gamma-carboxylation of glutamate residues in prothrombin synthesis. In Homo sapiens (Human), this protein is Ribosyldihydronicotinamide dehydrogenase [quinone] (NQO2).